The chain runs to 1189 residues: Pumilio homolog 1 (1189 aa).

Residue Ser-2 is modified to N-acetylserine. The residue at position 19 (Ser-19) is a Phosphoserine. The interval 22 to 73 is disordered; the sequence is LKHHPQEPANPNMPVVLTSGTGSQAQPQPAANQALAAGTHSSPVPGSIGVAG. The segment covering 45-58 has biased composition (low complexity); that stretch reads QAQPQPAANQALAA. 3 positions are modified to phosphoserine: Ser-75, Ser-98, and Ser-106. At Thr-112 the chain carries Phosphothreonine. 5 positions are modified to phosphoserine: Ser-124, Ser-159, Ser-197, Ser-209, and Ser-229. The disordered stretch occupies residues 233–272; that stretch reads SCLRKGGFGPRDADSDENDKGEKKNKGTFDGDKLGDLKEE. Over residues 250–272 the composition is skewed to basic and acidic residues; it reads NDKGEKKNKGTFDGDKLGDLKEE. A Phosphoserine modification is found at Ser-305. Residues 491-503 are compositionally biased toward low complexity; it reads QQSAPQAQQGQQQ. Disordered regions lie at residues 491-525 and 614-647; these read QQSAPQAQQGQQQVLRGGASQRPLTPNQNQQGQQT and AGTTNGPFRPLGTQQPQPQPQQQPSNNLASSSFY. Over residues 512–525 the composition is skewed to polar residues; sequence RPLTPNQNQQGQQT. At Thr-515 the chain carries Phosphothreonine. Residues 627–647 show a composition bias toward low complexity; that stretch reads QQPQPQPQQQPSNNLASSSFY. Phosphoserine occurs at positions 710 and 715. The interval 743–773 is disordered; the sequence is GPVGMPLPSQGPGHSQTPPPSLSSHGSSSSL. Over residues 764–773 the composition is skewed to low complexity; that stretch reads LSSHGSSSSL. Arg-797 carries the post-translational modification Omega-N-methylarginine. Ser-807 and Ser-823 each carry phosphoserine. Residues 829–1171 form the PUM-HD domain; the sequence is GRSRLLEDFR…HILAKLEKYY (343 aa). Pumilio repeat units follow at residues 849 to 884, 885 to 920, 921 to 958, 959 to 994, 995 to 1030, 1031 to 1066, 1067 to 1102, and 1106 to 1145; these read EIAGHIMEFSQDQHGSRFIQLKLERATAAERQLVFN, EILQAAYQLMVDVFGNYVIQKFFEFGSHEQKLALAE, RIRGHVLSLALQMYGCRVIQKALEFIPSDQQVINEMVR, ELDGHVLKCVKDQNGNHVVQKCIECVQPQSLQFIID, AFKGQVFALSTHPYGCRVIQRILEHCLPDQTLPILE, ELHQHTEQLVQDQYGNYVIQHVLEHGRPEDKSKIVA, EIRGNVLVLSQHKFASNVVEKCVTHASRTERAVLID, and TMNDGPHSALYTMMKDQYANYVVQKMIDVAEPGQRKIVMH. The interval 864 to 868 is adenine-nucleotide binding in RNA target; that stretch reads SRFIQ. The segment at 900–904 is uracil-nucleotide binding in RNA target; the sequence is NYVIQ. The adenine-nucleotide binding in RNA target stretch occupies residues 936 to 940; sequence CRVIQ. The tract at residues 974-978 is non-specific-nucleotide binding in RNA target; it reads NHVVQ. The adenine-nucleotide binding in RNA target stretch occupies residues 1010–1014; that stretch reads CRVIQ. Residues 1046 to 1050 are uracil-nucleotide binding in RNA target; it reads NYVIQ. Guanine-nucleotide binding in RNA target stretches follow at residues 1082–1086 and 1083–1086; these read SNVVE and NVVE. Positions 1125-1129 are uracil-nucleotide binding in RNA target; sequence NYVVQ.

As to quaternary structure, recruits the CCR4-POP2-NOT deadenylase leading to translational inhibition and mRNA degradation. Interacts with TRIM71 (via NHL repeats) in an RNA-dependent manner. Phosphorylation at Ser-715 promotes RNA-binding activity. Following growth factor stimulation phosphorylated at Ser-715, promoting binding to the 3'-UTR of CDKN1B/p27 mRNA. As to expression, widely expressed. Expressed in brain, heart, kidney, liver, lung, skin, intestine, spleen, testis and thymus. Weakly or not expressed in muscles and stomach. Expressed at various stages of myeloid and lymphoid cell development. Highly expressed in testis. Expressed in all major brain regions (at protein level).

The protein localises to the cytoplasm. The protein resides in the P-body. Its subcellular location is the cytoplasmic granule. Its function is as follows. Sequence-specific RNA-binding protein that acts as a post-transcriptional repressor by binding the 3'-UTR of mRNA targets. Binds to an RNA consensus sequence, the Pumilio Response Element (PRE), 5'-UGUANAUA-3', that is related to the Nanos Response Element (NRE). Mediates post-transcriptional repression of transcripts via different mechanisms: acts via direct recruitment of the CCR4-POP2-NOT deadenylase leading to translational inhibition and mRNA degradation. Also mediates deadenylation-independent repression by promoting accessibility of miRNAs. Following growth factor stimulation, phosphorylated and binds to the 3'-UTR of CDKN1B/p27 mRNA, inducing a local conformational change that exposes miRNA-binding sites, promoting association of miR-221 and miR-222, efficient suppression of CDKN1B/p27 expression, and rapid entry to the cell cycle. Acts as a post-transcriptional repressor of E2F3 mRNAs by binding to its 3'-UTR and facilitating miRNA regulation. Represses a program of genes necessary to maintain genomic stability such as key mitotic, DNA repair and DNA replication factors. Its ability to repress those target mRNAs is regulated by the lncRNA NORAD (non-coding RNA activated by DNA damage) which, due to its high abundance and multitude of PUMILIO binding sites, is able to sequester a significant fraction of PUM1 and PUM2 in the cytoplasm. Involved in neuronal functions by regulating ATXN1 mRNA levels: acts by binding to the 3'-UTR of ATXN1 transcripts, leading to their down-regulation independently of the miRNA machinery. In testis, acts as a post-transcriptional regulator of spermatogenesis by binding to the 3'-UTR of mRNAs coding for regulators of p53/TP53. Involved in embryonic stem cell renewal by facilitating the exit from the ground state: acts by targeting mRNAs coding for naive pluripotency transcription factors and accelerates their down-regulation at the onset of differentiation. Binds specifically to miRNA MIR199A precursor, with PUM2, regulates miRNA MIR199A expression at a postranscriptional level. This Mus musculus (Mouse) protein is Pumilio homolog 1.